The chain runs to 150 residues: uncharacterized protein (150 aa).

The segment covering methionine 1 to glycine 19 has biased composition (low complexity). 2 disordered regions span residues methionine 1 to threonine 21 and glutamate 85 to glutamate 131. A compositionally biased stretch (pro residues) spans arginine 106–valine 115.

This is an uncharacterized protein from Schizosaccharomyces pombe (strain 972 / ATCC 24843) (Fission yeast).